A 567-amino-acid polypeptide reads, in one-letter code: Urease subunit alpha (567 aa).

H134, H136, and K217 together coordinate Ni(2+). K217 bears the N6-carboxylysine mark. H219 is a binding site for substrate. Ni(2+)-binding residues include H246 and H272. The active-site Proton donor is the H320. Ni(2+) is bound at residue D360.

This sequence belongs to the metallo-dependent hydrolases superfamily. Urease alpha subunit family. As to quaternary structure, heterotrimer of UreA (gamma), UreB (beta) and UreC (alpha) subunits. Three heterotrimers associate to form the active enzyme. Ni cation is required as a cofactor. Post-translationally, carboxylation allows a single lysine to coordinate two nickel ions.

It localises to the cytoplasm. It carries out the reaction urea + 2 H2O + H(+) = hydrogencarbonate + 2 NH4(+). It participates in nitrogen metabolism; urea degradation; CO(2) and NH(3) from urea (urease route): step 1/1. This is Urease subunit alpha from Polynucleobacter asymbioticus (strain DSM 18221 / CIP 109841 / QLW-P1DMWA-1) (Polynucleobacter necessarius subsp. asymbioticus).